A 100-amino-acid chain; its full sequence is Large ribosomal subunit protein uL23 (100 aa).

The protein belongs to the universal ribosomal protein uL23 family. Part of the 50S ribosomal subunit. Contacts protein L29, and trigger factor when it is bound to the ribosome.

In terms of biological role, one of the early assembly proteins it binds 23S rRNA. One of the proteins that surrounds the polypeptide exit tunnel on the outside of the ribosome. Forms the main docking site for trigger factor binding to the ribosome. This Mycolicibacterium gilvum (strain PYR-GCK) (Mycobacterium gilvum (strain PYR-GCK)) protein is Large ribosomal subunit protein uL23.